A 248-amino-acid chain; its full sequence is Adenosylcobinamide-GDP ribazoletransferase (248 aa).

The next 6 membrane-spanning stretches (helical) occupy residues 36–56 (FFLP…YLGL), 59–79 (FLPP…ITGG), 113–133 (FGTI…YSLV), 137–157 (CSIA…FLCL), 170–190 (IFIG…ALAM), and 199–219 (ITII…LLCL).

It belongs to the CobS family. The cofactor is Mg(2+).

Its subcellular location is the cell membrane. It carries out the reaction alpha-ribazole + adenosylcob(III)inamide-GDP = adenosylcob(III)alamin + GMP + H(+). The enzyme catalyses alpha-ribazole 5'-phosphate + adenosylcob(III)inamide-GDP = adenosylcob(III)alamin 5'-phosphate + GMP + H(+). It functions in the pathway cofactor biosynthesis; adenosylcobalamin biosynthesis; adenosylcobalamin from cob(II)yrinate a,c-diamide: step 7/7. Functionally, joins adenosylcobinamide-GDP and alpha-ribazole to generate adenosylcobalamin (Ado-cobalamin). Also synthesizes adenosylcobalamin 5'-phosphate from adenosylcobinamide-GDP and alpha-ribazole 5'-phosphate. The protein is Adenosylcobinamide-GDP ribazoletransferase of Clostridium botulinum (strain 657 / Type Ba4).